A 356-amino-acid polypeptide reads, in one-letter code: UDP-N-acetylglucosamine--N-acetylmuramyl-(pentapeptide) pyrophosphoryl-undecaprenol N-acetylglucosamine transferase (356 aa).

UDP-N-acetyl-alpha-D-glucosamine is bound by residues 11–13, Asn-117, Arg-160, Ser-188, and Gln-290; that span reads TGG.

This sequence belongs to the glycosyltransferase 28 family. MurG subfamily.

It is found in the cell inner membrane. It carries out the reaction di-trans,octa-cis-undecaprenyl diphospho-N-acetyl-alpha-D-muramoyl-L-alanyl-D-glutamyl-meso-2,6-diaminopimeloyl-D-alanyl-D-alanine + UDP-N-acetyl-alpha-D-glucosamine = di-trans,octa-cis-undecaprenyl diphospho-[N-acetyl-alpha-D-glucosaminyl-(1-&gt;4)]-N-acetyl-alpha-D-muramoyl-L-alanyl-D-glutamyl-meso-2,6-diaminopimeloyl-D-alanyl-D-alanine + UDP + H(+). Its pathway is cell wall biogenesis; peptidoglycan biosynthesis. Cell wall formation. Catalyzes the transfer of a GlcNAc subunit on undecaprenyl-pyrophosphoryl-MurNAc-pentapeptide (lipid intermediate I) to form undecaprenyl-pyrophosphoryl-MurNAc-(pentapeptide)GlcNAc (lipid intermediate II). This is UDP-N-acetylglucosamine--N-acetylmuramyl-(pentapeptide) pyrophosphoryl-undecaprenol N-acetylglucosamine transferase from Rickettsia bellii (strain RML369-C).